A 668-amino-acid chain; its full sequence is Fructose-1,6-bisphosphatase class 3 (668 aa).

It belongs to the FBPase class 3 family. Mn(2+) is required as a cofactor.

The enzyme catalyses beta-D-fructose 1,6-bisphosphate + H2O = beta-D-fructose 6-phosphate + phosphate. It participates in carbohydrate biosynthesis; gluconeogenesis. This is Fructose-1,6-bisphosphatase class 3 from Clostridium botulinum (strain Okra / Type B1).